The following is a 483-amino-acid chain: MSPVASKEKPHAVFVPFPAQGHINPMLQLAKLLNYKGFHITFVNTEFNHKRMLESQGSHALDGLPSFRFETIPDGLPPADADARRNLPLVCDSTSKTCLAPFEALLTKLNSSPDSPPVTCIVADGVTSFTLDAAEHFGIPEVLFWTTSACGLMGYVQYYRLIEKGLTPFKDAKDFANGYLDTEIDWIPGMKDVRLKDMPSFIRTTDPNDIMLHYMVSETERSKKASAIILNTFDALEQEVVDALSTLLPPIYSIGPLQLPYSEIPSEYNDLKAIGSNLWAENTECLNWLDTKEPNSVVYVNFGSTTVMTNEQLVEFSWGLANSKKPFLWIIRPGLVAGETAVVPPEFLEETKERGMLASWCPQEQVLLHSAIGGFLTHSGWNSTLEALCGGVPLICWPFFAEQQTNVRYSCTQWGIGIEIDGEVKRDYIDGLVRTLMDGEEGKKMRKKALEWKMLAEDATAPKGSSYLALENVVSKVLLSPRD.

Catalysis depends on His-22, which acts as the Proton acceptor. His-22 contacts an anthocyanidin. The active-site Charge relay is the Asp-124. Positions 146, 363, 378, 381, 382, 383, and 386 each coordinate UDP-alpha-D-glucose. Residue Ala-401 coordinates an anthocyanidin. 2 residues coordinate UDP-alpha-D-glucose: Glu-402 and Gln-403.

Belongs to the UDP-glycosyltransferase family.

The enzyme catalyses (R)-mandelonitrile + UDP-alpha-D-glucose = (R)-prunasin + UDP + H(+). In terms of biological role, involved in the biosynthesis of the cyanogenic glycoside (R)-prunasin, a precursor of (R)-amygdalin, which at high concentrations is associated with intense bitterness in kernels of almond. Stereo-selectively glucosylates (R)-mandelonitrile to produce (R)-prunasin. This chain is (R)-mandelonitrile beta-glucosyltransferase, found in Prunus dulcis (Almond).